The chain runs to 210 residues: Rho-related GTP-binding protein RhoD (210 aa).

24–31 (GDGGCGKT) lines the GTP pocket. An Effector region motif is present at residues 46 to 54 (YSPTVFERY). Residues 71–75 (DTAGQ) and 129–132 (CKID) contribute to the GTP site. Cys207 is modified (cysteine methyl ester). Residue Cys207 is the site of S-geranylgeranyl cysteine attachment. A propeptide spans 208-210 (LAT) (removed in mature form).

The protein belongs to the small GTPase superfamily. Rho family. As to quaternary structure, interacts with PAK5. Interacts (in GTP-bound form) with DAPK3, FILIP1 and WHAMM. Interacts (independent of GTP-loaded status) with ANKFY1. As to expression, widely expressed.

It is found in the cell membrane. It localises to the early endosome. Its function is as follows. Involved in endosome dynamics. May coordinate membrane transport with the function of the cytoskeleton. Involved in the internalization and trafficking of activated tyrosine kinase receptors such as PDGFRB. Participates in the reorganization of actin cytoskeleton; the function seems to involve WHAMM and includes regulation of filopodia formation and actin filament bundling. Can modulate the effect of DAPK3 in reorganization of actin cytoskeleton and focal adhesion dissolution. In Mus musculus (Mouse), this protein is Rho-related GTP-binding protein RhoD (Rhod).